The sequence spans 485 residues: UDP-glycosyltransferase 71B2 (485 aa).

Residues Ser-287, 354–356, 371–379, and 393–396 contribute to the UDP-alpha-D-glucose site; these read APQ, HCGWNSTLE, and YAEQ.

The protein belongs to the UDP-glycosyltransferase family.

Glucosyltransferase that glucosylates the cell wall inhibitor hypostatin in vivo to form a bioactive glucoside. The sequence is that of UDP-glycosyltransferase 71B2 (UGT71B2) from Arabidopsis thaliana (Mouse-ear cress).